A 130-amino-acid polypeptide reads, in one-letter code: DNA-directed RNA polymerase subunit omega (130 aa).

Residues 108 to 130 (TEEELLKGLEGLAPPEEQPEEDE) are disordered.

Belongs to the RNA polymerase subunit omega family. The RNAP catalytic core consists of 2 alpha, 1 beta, 1 beta' and 1 omega subunit. When a sigma factor is associated with the core the holoenzyme is formed, which can initiate transcription.

The catalysed reaction is RNA(n) + a ribonucleoside 5'-triphosphate = RNA(n+1) + diphosphate. Its function is as follows. Promotes RNA polymerase assembly. Latches the N- and C-terminal regions of the beta' subunit thereby facilitating its interaction with the beta and alpha subunits. This chain is DNA-directed RNA polymerase subunit omega, found in Rhodopseudomonas palustris (strain ATCC BAA-98 / CGA009).